The following is a 199-amino-acid chain: uncharacterized protein (199 aa).

Positions 1–28 (MKKLATVGSLIVTSTLVFSSMPFQNAHA) are cleaved as a signal peptide.

The protein resides in the secreted. This is an uncharacterized protein from Staphylococcus aureus (strain NCTC 8325 / PS 47).